A 136-amino-acid chain; its full sequence is Small ribosomal subunit protein uS9 (136 aa).

The protein belongs to the universal ribosomal protein uS9 family.

This Borreliella burgdorferi (strain ZS7) (Borrelia burgdorferi) protein is Small ribosomal subunit protein uS9.